We begin with the raw amino-acid sequence, 375 residues long: Aminomethyltransferase (375 aa).

It belongs to the GcvT family. As to quaternary structure, the glycine cleavage system is composed of four proteins: P, T, L and H.

It carries out the reaction N(6)-[(R)-S(8)-aminomethyldihydrolipoyl]-L-lysyl-[protein] + (6S)-5,6,7,8-tetrahydrofolate = N(6)-[(R)-dihydrolipoyl]-L-lysyl-[protein] + (6R)-5,10-methylene-5,6,7,8-tetrahydrofolate + NH4(+). In terms of biological role, the glycine cleavage system catalyzes the degradation of glycine. The chain is Aminomethyltransferase from Ralstonia nicotianae (strain ATCC BAA-1114 / GMI1000) (Ralstonia solanacearum).